The sequence spans 630 residues: Probable potassium transport system protein Kup (630 aa).

The next 12 helical transmembrane spans lie at 19 to 39, 59 to 79, 108 to 128, 145 to 165, 173 to 193, 220 to 240, 255 to 275, 284 to 304, 345 to 365, 374 to 394, 405 to 425, and 427 to 447; these read GLIG…LYAV, LLSL…VLLI, WIIG…ATIT, PGLK…LFFV, VGGA…ALGL, LLAF…EALY, WLFF…ALVI, PFFF…ATIA, IYVP…VLGF, AYGI…AFVY, TVLV…SNVL, and VFDG…VMTT.

It belongs to the HAK/KUP transporter (TC 2.A.72) family.

The protein localises to the cell inner membrane. It carries out the reaction K(+)(in) + H(+)(in) = K(+)(out) + H(+)(out). In terms of biological role, transport of potassium into the cell. Likely operates as a K(+):H(+) symporter. This Acidiphilium cryptum (strain JF-5) protein is Probable potassium transport system protein Kup.